Here is an 857-residue protein sequence, read N- to C-terminus: Protein STICHEL-like 2 (857 aa).

Residue glycine 280–threonine 287 coordinates ATP. Positions 299, 309, 312, and 315 each coordinate Zn(2+). Residues leucine 544–glutamine 576 adopt a coiled-coil conformation. Disordered stretches follow at residues serine 593–lysine 629 and alanine 787–leucine 845. Positions glutamate 599–glutamate 610 are enriched in basic and acidic residues. Polar residues predominate over residues glutamine 834 to serine 843.

Belongs to the DnaX/STICHEL family.

The protein is Protein STICHEL-like 2 of Arabidopsis thaliana (Mouse-ear cress).